The sequence spans 49 residues: Large ribosomal subunit protein bL33B (49 aa).

It belongs to the bacterial ribosomal protein bL33 family.

The sequence is that of Large ribosomal subunit protein bL33B from Exiguobacterium sibiricum (strain DSM 17290 / CCUG 55495 / CIP 109462 / JCM 13490 / 255-15).